The chain runs to 92 residues: DNA-directed RNA polymerase subunit omega (92 aa).

The protein belongs to the RNA polymerase subunit omega family. In terms of assembly, the RNAP catalytic core consists of 2 alpha, 1 beta, 1 beta' and 1 omega subunit. When a sigma factor is associated with the core the holoenzyme is formed, which can initiate transcription.

The enzyme catalyses RNA(n) + a ribonucleoside 5'-triphosphate = RNA(n+1) + diphosphate. Its function is as follows. Promotes RNA polymerase assembly. Latches the N- and C-terminal regions of the beta' subunit thereby facilitating its interaction with the beta and alpha subunits. The protein is DNA-directed RNA polymerase subunit omega of Shewanella denitrificans (strain OS217 / ATCC BAA-1090 / DSM 15013).